Reading from the N-terminus, the 763-residue chain is Ribonucleoside-diphosphate reductase subunit alpha (763 aa).

Positions leucine 5–glycine 95 constitute an ATP-cone domain. ATP is bound by residues lysine 9, glutamate 15–lysine 21, threonine 55, and lysine 91. Threonine 209 serves as a coordination point for GDP. A disulfide bridge connects residues cysteine 225 and cysteine 462. DTTP contacts are provided by residues aspartate 232–leucine 234, arginine 262, and arginine 269. Asparagine 437 is a binding site for GDP. Asparagine 437 serves as the catalytic Proton acceptor. Cysteine 439 acts as the Cysteine radical intermediate in catalysis. GDP-binding positions include glutamate 441 and glutamate 623–serine 625. Residue glutamate 441 is the Proton acceptor of the active site.

It belongs to the ribonucleoside diphosphate reductase large chain family. As to quaternary structure, tetramer of two alpha and two beta subunits.

The catalysed reaction is a 2'-deoxyribonucleoside 5'-diphosphate + [thioredoxin]-disulfide + H2O = a ribonucleoside 5'-diphosphate + [thioredoxin]-dithiol. Under complex allosteric control mediated by deoxynucleoside triphosphates and ATP binding to separate specificity and activation sites on the alpha subunit. The type of nucleotide bound at the specificity site determines substrate preference. It seems probable that ATP makes the enzyme reduce CDP and UDP, dGTP favors ADP reduction and dTTP favors GDP reduction. Stimulated by ATP and inhibited by dATP binding to the activity site. Functionally, provides the precursors necessary for DNA synthesis. Catalyzes the biosynthesis of deoxyribonucleotides from the corresponding ribonucleotides. The polypeptide is Ribonucleoside-diphosphate reductase subunit alpha (nrdA) (Buchnera aphidicola subsp. Schizaphis graminum (strain Sg)).